The chain runs to 314 residues: uncharacterized protein (314 aa).

Composition is skewed to basic residues over residues 1-16 and 49-65; these read MAGNSKRRGAVRKAGT and AAKRAAKAAKQQQRRPA. The disordered stretch occupies residues 1-73; it reads MAGNSKRRGA…PARKTDETEL (73 aa). G266, I286, and L295 together coordinate S-adenosyl-L-methionine.

The protein belongs to the class IV-like SAM-binding methyltransferase superfamily. RNA methyltransferase TrmH family.

This is an uncharacterized protein from Mycobacterium sp. (strain KMS).